Consider the following 59-residue polypeptide: Large ribosomal subunit protein uL30 (59 aa).

Belongs to the universal ribosomal protein uL30 family. As to quaternary structure, part of the 50S ribosomal subunit.

The sequence is that of Large ribosomal subunit protein uL30 from Psychrobacter sp. (strain PRwf-1).